A 447-amino-acid chain; its full sequence is Phosphoglucosamine mutase (447 aa).

S100 functions as the Phosphoserine intermediate in the catalytic mechanism. Residues S100, D239, D241, and D243 each contribute to the Mg(2+) site. The residue at position 100 (S100) is a Phosphoserine.

It belongs to the phosphohexose mutase family. Mg(2+) serves as cofactor. Post-translationally, activated by phosphorylation.

The catalysed reaction is alpha-D-glucosamine 1-phosphate = D-glucosamine 6-phosphate. Catalyzes the conversion of glucosamine-6-phosphate to glucosamine-1-phosphate. In Thermoanaerobacter pseudethanolicus (strain ATCC 33223 / 39E) (Clostridium thermohydrosulfuricum), this protein is Phosphoglucosamine mutase.